Reading from the N-terminus, the 157-residue chain is Eukaryotic translation initiation factor 5A-1 (157 aa).

Residue serine 2 is modified to N-acetylserine. Serine 2 is modified (phosphoserine). Residues threonine 7 and threonine 10 each carry the phosphothreonine modification. Position 51 is a hypusine (lysine 51). The residue at position 74 (serine 74) is a Phosphoserine. Residue lysine 86 forms a Glycyl lysine isopeptide (Lys-Gly) (interchain with G-Cter in ubiquitin) linkage.

The protein belongs to the eIF-5A family. As to quaternary structure, homodimer. Binds to 80S ribosomes. Actively translating ribosomes show mutually exclusive binding of eIF5a (HYP2 or ANB1) and EFT1/eEF2. Interacts with DYS1 and LIA1. Lys-51 undergoes hypusination, a unique post-translational modification that consists in the addition of a butylamino group from spermidine to lysine side chain, leading to the formation of the unusual amino acid hypusine. eIF-5As are the only known proteins to undergo this modification, which is essential for their function.

The protein localises to the cytoplasm. Its function is as follows. Translation factor that promotes translation elongation and termination, particularly upon ribosome stalling at specific amino acid sequence contexts. Binds between the exit (E) and peptidyl (P) site of the ribosome and promotes rescue of stalled ribosome: specifically required for efficient translation of polyproline-containing peptides as well as other motifs that stall the ribosome. Acts as a ribosome quality control (RQC) cofactor by joining the RQC complex to facilitate peptidyl transfer during CAT tailing step. Involved in actin dynamics and cell cycle progression, mRNA decay and probably in a pathway involved in stress response and maintenance of cell wall integrity. The protein is Eukaryotic translation initiation factor 5A-1 (HYP2) of Saccharomyces cerevisiae (strain ATCC 204508 / S288c) (Baker's yeast).